We begin with the raw amino-acid sequence, 619 residues long: Chaperone protein HscA homolog (619 aa).

The protein belongs to the heat shock protein 70 family.

Chaperone involved in the maturation of iron-sulfur cluster-containing proteins. Has a low intrinsic ATPase activity which is markedly stimulated by HscB. The polypeptide is Chaperone protein HscA homolog (Acinetobacter baumannii (strain ATCC 17978 / DSM 105126 / CIP 53.77 / LMG 1025 / NCDC KC755 / 5377)).